A 519-amino-acid chain; its full sequence is Matrix metalloproteinase-B (519 aa).

An N-terminal signal peptide occupies residues 1 to 26 (MTKWSPNGNPLSTIYLILSLFTLAHT). Positions 27 to 126 (APTTQHSRTT…RQEQTKRTKR (100 aa)) are cleaved as a propeptide — activation peptide. Positions 29-39 (TTQHSRTTTQL) are enriched in polar residues. Residues 29–50 (TTQHSRTTTQLRLEDEDGGGGV) are disordered. A Cysteine switch motif is present at residues 109–116 (PRCTQTDV). Zn(2+) contacts are provided by C111, H208, D210, H232, H247, and H276. The active site involves E277. The Zn(2+) site is built by H280 and H286. N341 carries N-linked (GlcNAc...) asparagine glycosylation. Basic and acidic residues predominate over residues 391 to 402 (KDKRSYRGDSKI). The segment at 391-410 (KDKRSYRGDSKIPKCSSNNS) is disordered. N408 carries N-linked (GlcNAc...) asparagine glycosylation.

The protein belongs to the peptidase M10A family. The cofactor is Zn(2+). As to expression, expressed in spermatheca and spermathecal-uterine valve, weakly in vulva and anal muscles and in two cells in the head (probably RMEV and RMED motor neurons).

It is found in the secreted. Its subcellular location is the extracellular space. It localises to the extracellular matrix. Inhibited by human TIMP1 and TIMP2 and the broad MMP inhibitors BB94 (Batimastat) and CT543. Its function is as follows. Metalloprotease involved in molting, a process during larval stages in which a new cuticle is formed and the old cuticle is shed. Plays a role in thermotolerance probably by preventing the accumulation of oxidized lipoproteins and cholesterol. This Caenorhabditis elegans protein is Matrix metalloproteinase-B.